Consider the following 266-residue polypeptide: Phosphonates import ATP-binding protein PhnC (266 aa).

Residues 2–246 enclose the ABC transporter domain; that stretch reads IEIKNVSKTY…KFAEIYGRPI (245 aa). 35-42 is a binding site for ATP; the sequence is GLSGAGKS.

The protein belongs to the ABC transporter superfamily. Phosphonates importer (TC 3.A.1.9.1) family. The complex is composed of two ATP-binding proteins (PhnC), two transmembrane proteins (PhnE) and a solute-binding protein (PhnD).

It localises to the cell membrane. It carries out the reaction phosphonate(out) + ATP + H2O = phosphonate(in) + ADP + phosphate + H(+). In terms of biological role, part of the ABC transporter complex PhnCDE involved in phosphonates import. Responsible for energy coupling to the transport system. In Shouchella clausii (strain KSM-K16) (Alkalihalobacillus clausii), this protein is Phosphonates import ATP-binding protein PhnC.